A 515-amino-acid polypeptide reads, in one-letter code: Maturase K (515 aa).

It belongs to the intron maturase 2 family. MatK subfamily.

It localises to the plastid. The protein localises to the chloroplast. In terms of biological role, usually encoded in the trnK tRNA gene intron. Probably assists in splicing its own and other chloroplast group II introns. This is Maturase K from Pinus halepensis (Aleppo pine).